We begin with the raw amino-acid sequence, 58 residues long: Small ribosomal subunit protein eS27 (58 aa).

Zn(2+) is bound by residues C10, C13, C29, and C32. A C4-type zinc finger spans residues 10 to 32 (CPDCEHEQVIFDHPSTIVKCIIC).

This sequence belongs to the eukaryotic ribosomal protein eS27 family. Part of the 30S ribosomal subunit. Zn(2+) is required as a cofactor.

This is Small ribosomal subunit protein eS27 from Archaeoglobus fulgidus (strain ATCC 49558 / DSM 4304 / JCM 9628 / NBRC 100126 / VC-16).